A 416-amino-acid polypeptide reads, in one-letter code: 4-hydroxy-3-methylbut-2-en-1-yl diphosphate synthase (flavodoxin) (416 aa).

Cys-304, Cys-307, Cys-350, and Glu-357 together coordinate [4Fe-4S] cluster.

Belongs to the IspG family. It depends on [4Fe-4S] cluster as a cofactor.

The enzyme catalyses (2E)-4-hydroxy-3-methylbut-2-enyl diphosphate + oxidized [flavodoxin] + H2O + 2 H(+) = 2-C-methyl-D-erythritol 2,4-cyclic diphosphate + reduced [flavodoxin]. It participates in isoprenoid biosynthesis; isopentenyl diphosphate biosynthesis via DXP pathway; isopentenyl diphosphate from 1-deoxy-D-xylulose 5-phosphate: step 5/6. Converts 2C-methyl-D-erythritol 2,4-cyclodiphosphate (ME-2,4cPP) into 1-hydroxy-2-methyl-2-(E)-butenyl 4-diphosphate. This Burkholderia pseudomallei (strain K96243) protein is 4-hydroxy-3-methylbut-2-en-1-yl diphosphate synthase (flavodoxin).